A 119-amino-acid chain; its full sequence is Ribosome-binding factor A (119 aa).

This sequence belongs to the RbfA family. As to quaternary structure, monomer. Binds 30S ribosomal subunits, but not 50S ribosomal subunits or 70S ribosomes.

It is found in the cytoplasm. One of several proteins that assist in the late maturation steps of the functional core of the 30S ribosomal subunit. Associates with free 30S ribosomal subunits (but not with 30S subunits that are part of 70S ribosomes or polysomes). Required for efficient processing of 16S rRNA. May interact with the 5'-terminal helix region of 16S rRNA. The sequence is that of Ribosome-binding factor A from Ligilactobacillus salivarius (strain UCC118) (Lactobacillus salivarius).